A 310-amino-acid polypeptide reads, in one-letter code: tRNA dimethylallyltransferase (310 aa).

24 to 31 (GPTASGKT) lines the ATP pocket. 26–31 (TASGKT) contributes to the substrate binding site. The interaction with substrate tRNA stretch occupies residues 49 to 52 (DSRQ).

It belongs to the IPP transferase family. In terms of assembly, monomer. Mg(2+) is required as a cofactor.

It carries out the reaction adenosine(37) in tRNA + dimethylallyl diphosphate = N(6)-dimethylallyladenosine(37) in tRNA + diphosphate. Functionally, catalyzes the transfer of a dimethylallyl group onto the adenine at position 37 in tRNAs that read codons beginning with uridine, leading to the formation of N6-(dimethylallyl)adenosine (i(6)A). This chain is tRNA dimethylallyltransferase, found in Synechococcus sp. (strain WH7803).